The sequence spans 166 residues: UPF0254 protein Maeo_0668 (166 aa).

The protein belongs to the UPF0254 family.

The sequence is that of UPF0254 protein Maeo_0668 from Methanococcus aeolicus (strain ATCC BAA-1280 / DSM 17508 / OCM 812 / Nankai-3).